The primary structure comprises 315 residues: Olfactory receptor 3A3 (315 aa).

Over 1–28 (MESEAGTNRTAVAEFMLLGLVQTEEMQS) the chain is Extracellular. A glycan (N-linked (GlcNAc...) asparagine) is linked at Asn-8. A helical transmembrane segment spans residues 29 to 52 (VIFVLLLFAYLVTTGGNLSILAAI). At 53 to 60 (LVEPKLHT) the chain is on the cytoplasmic side. Residues 61-82 (PMYFFLGNLSVLDVGCITVTVP) traverse the membrane as a helical segment. At 83–103 (AMLGRLLSHKSTISYDACLSQ) the chain is on the extracellular side. A disulfide bridge links Cys-100 with Cys-192. Residues 104–123 (LFFFHLLAGMDCFLLTAMAY) form a helical membrane-spanning segment. Over 124 to 143 (DRFLAICRPLTYSTHMNQRV) the chain is Cytoplasmic. A helical membrane pass occupies residues 144-161 (QRMLVAVSWTCAFTNALT). Over 162 to 199 (HTIALTTLNFCGPSVINHFYCDLPQLFQLSCSSTQLNE) the chain is Extracellular. The chain crosses the membrane as a helical span at residues 200 to 222 (LLLFVAAAVMAVAPLVFISVSYA). The Cytoplasmic portion of the chain corresponds to 223–239 (HVVAAVLQIHSAEGRKK). A helical membrane pass occupies residues 240 to 262 (AFSTCGSHLTVVGIFYGTGVFSY). Residues 263–275 (MRLGSVESSDKDK) are Extracellular-facing. The chain crosses the membrane as a helical span at residues 276-295 (GVGVFMTVINPMLNPLIYSL). Over 296–315 (RNTDVQGALCQLLVVKRSLT) the chain is Cytoplasmic.

The protein belongs to the G-protein coupled receptor 1 family.

Its subcellular location is the cell membrane. Odorant receptor. The protein is Olfactory receptor 3A3 (OR3A3) of Pan troglodytes (Chimpanzee).